A 218-amino-acid chain; its full sequence is Small ribosomal subunit protein uS3 (218 aa).

Positions 40 to 109 (IRKIINTEYS…DVSINIREVK (70 aa)) constitute a KH type-2 domain.

Belongs to the universal ribosomal protein uS3 family. In terms of assembly, part of the 30S ribosomal subunit. Forms a tight complex with proteins S10 and S14.

Functionally, binds the lower part of the 30S subunit head. Binds mRNA in the 70S ribosome, positioning it for translation. The polypeptide is Small ribosomal subunit protein uS3 (Orientia tsutsugamushi (strain Boryong) (Rickettsia tsutsugamushi)).